The primary structure comprises 249 residues: Coproheme decarboxylase (249 aa).

Residues Arg-131, 145–149, His-172, and Gln-185 contribute to the Fe-coproporphyrin III site; that span reads YPMDK. Tyr-145 is a catalytic residue.

It belongs to the ChdC family. Type 1 subfamily. Fe-coproporphyrin III serves as cofactor.

It carries out the reaction Fe-coproporphyrin III + 2 H2O2 + 2 H(+) = heme b + 2 CO2 + 4 H2O. It catalyses the reaction Fe-coproporphyrin III + H2O2 + H(+) = harderoheme III + CO2 + 2 H2O. The enzyme catalyses harderoheme III + H2O2 + H(+) = heme b + CO2 + 2 H2O. The protein operates within porphyrin-containing compound metabolism; protoheme biosynthesis. Its function is as follows. Involved in coproporphyrin-dependent heme b biosynthesis. Catalyzes the decarboxylation of Fe-coproporphyrin III (coproheme) to heme b (protoheme IX), the last step of the pathway. The reaction occurs in a stepwise manner with a three-propionate intermediate. This is Coproheme decarboxylase from Staphylococcus saprophyticus subsp. saprophyticus (strain ATCC 15305 / DSM 20229 / NCIMB 8711 / NCTC 7292 / S-41).